The chain runs to 160 residues: NADH-quinone oxidoreductase subunit B (160 aa).

[4Fe-4S] cluster-binding residues include cysteine 37, cysteine 38, cysteine 102, and cysteine 132.

The protein belongs to the complex I 20 kDa subunit family. NDH-1 is composed of 14 different subunits. Subunits NuoB, C, D, E, F, and G constitute the peripheral sector of the complex. [4Fe-4S] cluster serves as cofactor.

It is found in the cell inner membrane. It carries out the reaction a quinone + NADH + 5 H(+)(in) = a quinol + NAD(+) + 4 H(+)(out). Functionally, NDH-1 shuttles electrons from NADH, via FMN and iron-sulfur (Fe-S) centers, to quinones in the respiratory chain. Couples the redox reaction to proton translocation (for every two electrons transferred, four hydrogen ions are translocated across the cytoplasmic membrane), and thus conserves the redox energy in a proton gradient. This chain is NADH-quinone oxidoreductase subunit B, found in Neisseria meningitidis serogroup A / serotype 4A (strain DSM 15465 / Z2491).